The sequence spans 345 residues: D-erythrose-4-phosphate dehydrogenase (345 aa).

Residue 11–12 (RI) participates in NAD(+) binding. Substrate is bound by residues 158–160 (SCT), arginine 204, 217–218 (TK), and arginine 240. The active-site Nucleophile is cysteine 159. Asparagine 322 serves as a coordination point for NAD(+).

This sequence belongs to the glyceraldehyde-3-phosphate dehydrogenase family. Epd subfamily. As to quaternary structure, homotetramer.

Its subcellular location is the cytoplasm. It carries out the reaction D-erythrose 4-phosphate + NAD(+) + H2O = 4-phospho-D-erythronate + NADH + 2 H(+). Its pathway is cofactor biosynthesis; pyridoxine 5'-phosphate biosynthesis; pyridoxine 5'-phosphate from D-erythrose 4-phosphate: step 1/5. Its function is as follows. Catalyzes the NAD-dependent conversion of D-erythrose 4-phosphate to 4-phosphoerythronate. The sequence is that of D-erythrose-4-phosphate dehydrogenase from Vibrio parahaemolyticus serotype O3:K6 (strain RIMD 2210633).